The primary structure comprises 249 residues: MALSKIAALSTILASASLVAGHGYVSSIVANGQNYTGYLADSYPYMSNPPKSVGWATTATDLGFEDGTEYADPNIICHRNGTNAQLSAPVQAGSKVEIQWTPWPDSHHGPVITYLASCNGDCSTVDKSTLEFFKIDAVGLIDDSSVPGTWGTDKLIEAGNRWTVTIPDSIAAGNYVMRHEIIALHSASQKDGAQNYPQCLNLQVTGGGEGVPQGTLGEKLYKDTDPGILVNIYTTLSNYVIPGPALYSG.

The N-terminal stretch at 1-21 (MALSKIAALSTILASASLVAG) is a signal peptide. His-22 lines the Cu(2+) pocket. Methylhistidine is present on His-22. 2 N-linked (GlcNAc...) asparagine glycosylation sites follow: Asn-34 and Asn-80. Intrachain disulfides connect Cys-77/Cys-199 and Cys-118/Cys-122. Cu(2+) is bound at residue His-107. Positions 185 and 194 each coordinate O2. Tyr-196 is a Cu(2+) binding site.

This sequence belongs to the polysaccharide monooxygenase AA9 family. Cu(2+) is required as a cofactor. Post-translationally, the catalytically essential N-terminal histidine His-22 is post-translationally modified by methylation to prevent protonation of the histidine side chain, and protect the critical active site of the enzyme from oxidative damage.

The protein resides in the secreted. It catalyses the reaction [(1-&gt;4)-beta-D-glucosyl]n+m + reduced acceptor + O2 = 4-dehydro-beta-D-glucosyl-[(1-&gt;4)-beta-D-glucosyl]n-1 + [(1-&gt;4)-beta-D-glucosyl]m + acceptor + H2O.. Lytic polysaccharide monooxygenase (LPMO) that exhibits a mixed C1/C4 oxidative cleavage activity on cellulose and xyloglucan. Catalysis by LPMOs requires the reduction of the active-site copper from Cu(II) to Cu(I) by a reducing agent and H(2)O(2) or O(2) as a cosubstrate. Shows a higher boosting effect with cellulases on the enzymatic saccharification of complex lignocellulosic substrates associated with xyloglucan than on the lignocellulosic substrates without xyloglucan. The oxidative cleavage of xyloglucan by LPMO9A may facilitate to open up the sterical hindrance of cellulose by xyloglucan and thereby increase accessibility for cellulase to lignocellulosic substrates. This chain is AA9 family lytic polysaccharide monooxygenase A, found in Penicillium parvum (Eupenicillium parvum).